Consider the following 543-residue polypeptide: Tyrosine-protein kinase Yes (543 aa).

The span at 1–20 shows a compositional bias: basic and acidic residues; the sequence is MGCIKSKENKSPAIKYRPEN. Residues 1–45 are disordered; sequence MGCIKSKENKSPAIKYRPENTPEPVSTSVSHYGAEPTTVSPCPSS. Residue Gly2 is the site of N-myristoyl glycine attachment. The S-palmitoyl cysteine; in membrane form moiety is linked to residue Cys3. Phosphothreonine is present on Thr21. Phosphotyrosine is present on Tyr32. Phosphoserine is present on Ser40. Positions 91-152 constitute an SH3 domain; sequence GGVTIFVALY…PSNYVAPADS (62 aa). One can recognise an SH2 domain in the interval 158–255; sequence WYFGKMGRKD…GLCHKLTTVC (98 aa). In terms of domain architecture, Protein kinase spans 277–530; sequence LRLEVKLGQG…YIQSFLEDYF (254 aa). Residues 283–291 and Lys305 each bind ATP; that span reads LGQGCFGEV. Residues Tyr336 and Tyr345 each carry the phosphotyrosine modification. The active-site Proton acceptor is Asp396. At Tyr426 the chain carries Phosphotyrosine; by autocatalysis. Tyr446 is modified (phosphotyrosine). Tyr537 is subject to Phosphotyrosine; by CSK.

The protein belongs to the protein kinase superfamily. Tyr protein kinase family. SRC subfamily. In terms of assembly, interacts with YAP1 and CSF1R. Interacts with CTNND1; this interaction allows YES1-mediated activation of FYN and FER and subsequent phosphorylation of CTNND1. Interacts with FASLG. Interacts with IL6ST/gp130. Interacts with SCRIB, when YES1 is in a closed conformation; the interaction facilitates YES1 autophosphorylation. In terms of processing, phosphorylated. Phosphorylation by CSK on the C-terminal tail maintains the enzyme in an inactive state. Autophosphorylation at Tyr-426 maintains enzyme activity by blocking CSK-mediated inhibition. Post-translationally, palmitoylation at Cys-3 promotes membrane localization. In terms of tissue distribution, expressed in the epithelial cells of renal proximal tubules and stomach as well as hematopoietic cells in the bone marrow and spleen in the fetal tissues. In adult, expressed in epithelial cells of the renal proximal tubules and present in keratinocytes in the basal epidermal layer of epidermis.

It localises to the cell membrane. It is found in the cytoplasm. Its subcellular location is the cytoskeleton. The protein resides in the microtubule organizing center. The protein localises to the centrosome. It localises to the cytosol. It is found in the cell junction. It catalyses the reaction L-tyrosyl-[protein] + ATP = O-phospho-L-tyrosyl-[protein] + ADP + H(+). Non-receptor protein tyrosine kinase that is involved in the regulation of cell growth and survival, apoptosis, cell-cell adhesion, cytoskeleton remodeling, and differentiation. Stimulation by receptor tyrosine kinases (RTKs) including EGFR, PDGFR, CSF1R and FGFR leads to recruitment of YES1 to the phosphorylated receptor, and activation and phosphorylation of downstream substrates. Upon EGFR activation, promotes the phosphorylation of PARD3 to favor epithelial tight junction assembly. Participates in the phosphorylation of specific junctional components such as CTNND1 by stimulating the FYN and FER tyrosine kinases at cell-cell contacts. Upon T-cell stimulation by CXCL12, phosphorylates collapsin response mediator protein 2/DPYSL2 and induces T-cell migration. Participates in CD95L/FASLG signaling pathway and mediates AKT-mediated cell migration. Plays a role in cell cycle progression by phosphorylating the cyclin-dependent kinase 4/CDK4 thus regulating the G1 phase. Also involved in G2/M progression and cytokinesis. Catalyzes phosphorylation of organic cation transporter OCT2 which induces its transport activity. This Homo sapiens (Human) protein is Tyrosine-protein kinase Yes (YES1).